The sequence spans 110 residues: U12-hexatoxin-Hi1a (110 aa).

The signal sequence occupies residues 1-18 (MRVALVFLVLSILAATHG). 3 cysteine pairs are disulfide-bonded: cysteine 72/cysteine 86, cysteine 79/cysteine 91, and cysteine 85/cysteine 104.

Expressed by the venom gland.

It localises to the secreted. Probable ion channel inhibitor. The protein is U12-hexatoxin-Hi1a of Hadronyche infensa (Fraser island funnel-web spider).